The sequence spans 349 residues: MAALDQQPLLHDGGDQKPPPEGAARRFRRCRTAPSSEPPPTDKDNSSAADAPPKTLFTGGGRPSFRLVGLLLVAYLLLGTIAFYLAMDHMSGTRTTRALDALYFCVVTMTTVGYGDLVPASDAAKLLACAFVFAGVAVVGTFLSKAADYLVEKQEALLFRALHSHTMVRAMEMNKVRYKLYTAGLLLVAAVASGTVVLWKVEGMRAVDAFYCVCATVTTLGYGDRSFSSEGGRAFAVAWITVSTVVVALFFLYAAELYTERRQRELARWVLRRRTTNMDLEAADLDGDHRVGAADFVLYKLKELGKISQEDISEFLDEFDNLDADHSGTLSPADLAAAQPTPDPPPSLR.

The disordered stretch occupies residues 1-53 (MAALDQQPLLHDGGDQKPPPEGAARRFRRCRTAPSSEPPPTDKDNSSAADAPP). Residues 1-66 (MAALDQQPLL…FTGGGRPSFR (66 aa)) lie on the Cytoplasmic side of the membrane. The chain crosses the membrane as a helical span at residues 67–87 (LVGLLLVAYLLLGTIAFYLAM). The segment at residues 100-119 (DALYFCVVTMTTVGYGDLVP) is an intramembrane region (pore-forming). Residues 123–143 (AAKLLACAFVFAGVAVVGTFL) traverse the membrane as a helical segment. Topologically, residues 144–180 (SKAADYLVEKQEALLFRALHSHTMVRAMEMNKVRYKL) are cytoplasmic. Residues 181-201 (YTAGLLLVAAVASGTVVLWKV) traverse the membrane as a helical segment. The segment at residues 208–227 (DAFYCVCATVTTLGYGDRSF) is an intramembrane region (pore-forming). A helical transmembrane segment spans residues 234-254 (AFAVAWITVSTVVVALFFLYA). The Cytoplasmic segment spans residues 255-349 (AELYTERRQR…PTPDPPPSLR (95 aa)). 2 EF-hand domains span residues 271–306 (LRRRTTNMDLEAADLDGDHRVGAADFVLYKLKELGK) and 310–345 (EDISEFLDEFDNLDADHSGTLSPADLAAAQPTPDPP). D284, D286, D288, R290, D295, D323, D325, S327, T329, and D334 together coordinate Ca(2+). Positions 326–349 (HSGTLSPADLAAAQPTPDPPPSLR) are disordered.

The protein belongs to the two pore domain potassium channel (TC 1.A.1.7) family. In terms of assembly, homodimer.

Its subcellular location is the vacuole membrane. Functionally, highly selective inward-rectifying potassium channel that is specifically located in the tonoplast of protein storage vacuoles. Functions independently of the voltage difference across the membrane. This chain is Two pore potassium channel b (TPKB), found in Oryza sativa subsp. japonica (Rice).